We begin with the raw amino-acid sequence, 1605 residues long: GTPase-activating protein pac-1 (1605 aa).

Residues 1-574 (MEEHHRRLHV…QRFIALFNSS (574 aa)) are required for localization to adherens junctions. Disordered regions lie at residues 293 to 430 (QRHP…ISTS), 529 to 556 (MRSGGASSATTTTTSNSGQQTSRSLNAP), and 574 to 593 (SKTSDGSGEHKKSRMKRSRT). Residues 323-334 (SKEDPSEDTGHD) are compositionally biased toward basic and acidic residues. Low complexity-rich tracts occupy residues 353-365 (RNASLRNRQSSRS), 420-430 (TTSSTSSISTS), and 530-552 (RSGGASSATTTTTSNSGQQTSRS). Residues 599-726 (RFALPGTILQ…WISVLQSSSE (128 aa)) enclose the PH domain. Polar residues-rich tracts occupy residues 728-745 (GIATGSSVDENELSTTGR) and 846-855 (KNSQLQSPTA). Disordered regions lie at residues 728–752 (GIATGSSVDENELSTTGRHNNNAVS) and 846–942 (KNSQ…AGAP). The segment covering 868–879 (SSSQTMATTSSS) has biased composition (low complexity). Basic residues predominate over residues 908-917 (SGRKWKKSKA). The segment covering 928-941 (GSSSGSQQQGAAGA) has biased composition (low complexity). The 199-residue stretch at 948–1146 (VRIADCPTGS…TLIHYNLWMF (199 aa)) folds into the Rho-GAP domain. 5 disordered regions span residues 1152–1176 (TEDAVPEQHPADGQNPLEPGGYGVG), 1207–1258 (EGKG…AASV), 1277–1339 (SRQT…RRKR), 1438–1533 (TSDY…ARRH), and 1554–1605 (GIRK…DELL). A compositionally biased stretch (basic residues) spans 1211–1229 (QKIKNMLRRNSRRDKSKSK). Polar residues-rich tracts occupy residues 1244–1257 (GWTQPTPSNTSAAS) and 1278–1300 (RQTVSPQMTSGSADGASSTRLDQ). A compositionally biased stretch (low complexity) spans 1301-1312 (SPSLESSLGSLP). Residues 1438-1453 (TSDYSTTSSAPLSTNP) are compositionally biased toward polar residues. Residues 1461-1476 (DQPNSSSDYASSDPSP) are compositionally biased toward low complexity. 2 stretches are compositionally biased toward polar residues: residues 1480 to 1493 (NPSTSPASRPSNLA) and 1500 to 1515 (HATSSSGQSHQPMSRS). Basic and acidic residues predominate over residues 1558–1575 (SSPDVSRDEVSDDEKNHQ).

In terms of assembly, associated with the catenin-cadherin complex consisting of hmr-1, hmp-1 and hmp-2; this is mediated by interaction with picc-1.

Its subcellular location is the cytoplasm. It is found in the cell junction. The protein localises to the adherens junction. GTPase-activating protein for members of the Rho subfamily including Rac1, RhoA and cdc42 and other Ras-related subfamilies including let-60. Mediates radial (inner-outer) polarity and gastrulation by excluding par-6 from contacted cell surfaces; acts by inactivating cdc42 at inner cell surfaces which limits active cdc42 to outer cell surfaces devoid of cell-cell contacts, where cdc42 can bind and recruit par-6. Required for blastomere polarization. In Caenorhabditis elegans, this protein is GTPase-activating protein pac-1 (pac-1).